A 274-amino-acid chain; its full sequence is 4-deoxy-L-threo-5-hexosulose-uronate ketol-isomerase (274 aa).

Residues H192, H194, E199, and H241 each contribute to the Zn(2+) site.

This sequence belongs to the KduI family. Zn(2+) serves as cofactor.

The enzyme catalyses 5-dehydro-4-deoxy-D-glucuronate = 3-deoxy-D-glycero-2,5-hexodiulosonate. It functions in the pathway glycan metabolism; pectin degradation; 2-dehydro-3-deoxy-D-gluconate from pectin: step 4/5. Catalyzes the isomerization of 5-dehydro-4-deoxy-D-glucuronate to 3-deoxy-D-glycero-2,5-hexodiulosonate. This chain is 4-deoxy-L-threo-5-hexosulose-uronate ketol-isomerase, found in Agrobacterium fabrum (strain C58 / ATCC 33970) (Agrobacterium tumefaciens (strain C58)).